The chain runs to 606 residues: Chaperone protein DnaK (606 aa).

The residue at position 174 (threonine 174) is a Phosphothreonine; by autocatalysis. The segment at 578–606 (YTQAGPQGGTNPGGQGGTDGNVNTDYKVY) is disordered. Residues 583–596 (PQGGTNPGGQGGTD) show a composition bias toward gly residues.

It belongs to the heat shock protein 70 family.

In terms of biological role, acts as a chaperone. This Caldicellulosiruptor saccharolyticus (strain ATCC 43494 / DSM 8903 / Tp8T 6331) protein is Chaperone protein DnaK.